Consider the following 414-residue polypeptide: Na(+)-translocating NADH-quinone reductase subunit B (414 aa).

Helical transmembrane passes span 56–76 (IMIM…YNVG), 82–104 (ALNH…HYWL), 129–149 (FLPI…LFCM), and 164–184 (ILFA…LGIT). Residue threonine 236 is modified to FMN phosphoryl threonine. A run of 5 helical transmembrane segments spans residues 275–295 (VSTL…IASW), 297–317 (IIAG…VIGS), 325–345 (MPWH…FMAT), 358–378 (WAYG…NPAY), and 381–401 (GMML…HIVI).

This sequence belongs to the NqrB/RnfD family. Composed of six subunits; NqrA, NqrB, NqrC, NqrD, NqrE and NqrF. FMN is required as a cofactor.

It is found in the cell inner membrane. It carries out the reaction a ubiquinone + n Na(+)(in) + NADH + H(+) = a ubiquinol + n Na(+)(out) + NAD(+). NQR complex catalyzes the reduction of ubiquinone-1 to ubiquinol by two successive reactions, coupled with the transport of Na(+) ions from the cytoplasm to the periplasm. NqrA to NqrE are probably involved in the second step, the conversion of ubisemiquinone to ubiquinol. This Vibrio anguillarum (Listonella anguillarum) protein is Na(+)-translocating NADH-quinone reductase subunit B.